Consider the following 306-residue polypeptide: CRISPR-associated endonuclease Cas1 (306 aa).

Residues glutamate 143, histidine 210, and aspartate 223 each contribute to the Mn(2+) site.

It belongs to the CRISPR-associated endonuclease Cas1 family. Homodimer, forms a heterotetramer with a Cas2 homodimer. Mg(2+) is required as a cofactor. It depends on Mn(2+) as a cofactor.

Its function is as follows. CRISPR (clustered regularly interspaced short palindromic repeat), is an adaptive immune system that provides protection against mobile genetic elements (viruses, transposable elements and conjugative plasmids). CRISPR clusters contain spacers, sequences complementary to antecedent mobile elements, and target invading nucleic acids. CRISPR clusters are transcribed and processed into CRISPR RNA (crRNA). Acts as a dsDNA endonuclease. Involved in the integration of spacer DNA into the CRISPR cassette. The protein is CRISPR-associated endonuclease Cas1 of Geobacter sulfurreducens (strain ATCC 51573 / DSM 12127 / PCA).